We begin with the raw amino-acid sequence, 78 residues long: Probable cytochrome c oxidase subunit 6B (78 aa).

The CHCH domain maps to 21–64 (TKHCWANYVDYYGCVKHYNGDNSKCQTFFNSMNSLCPAAWISEW). Positions 24-34 (CWANYVDYYGC) match the Cx9C motif motif. 2 disulfide bridges follow: C24-C56 and C34-C45. Positions 45–56 (CQTFFNSMNSLC) match the Cx10C motif motif.

It belongs to the cytochrome c oxidase subunit 6B family. In terms of assembly, component of the cytochrome c oxidase (complex IV, CIV), a multisubunit enzyme composed of a catalytic core of 3 subunits and several supernumerary subunits. The complex exists as a monomer or a dimer and forms supercomplexes (SCs) in the inner mitochondrial membrane with ubiquinol-cytochrome c oxidoreductase (cytochrome b-c1 complex, complex III, CIII).

It is found in the mitochondrion inner membrane. It functions in the pathway energy metabolism; oxidative phosphorylation. Component of the cytochrome c oxidase, the last enzyme in the mitochondrial electron transport chain which drives oxidative phosphorylation. The respiratory chain contains 3 multisubunit complexes succinate dehydrogenase (complex II, CII), ubiquinol-cytochrome c oxidoreductase (cytochrome b-c1 complex, complex III, CIII) and cytochrome c oxidase (complex IV, CIV), that cooperate to transfer electrons derived from NADH and succinate to molecular oxygen, creating an electrochemical gradient over the inner membrane that drives transmembrane transport and the ATP synthase. Cytochrome c oxidase is the component of the respiratory chain that catalyzes the reduction of oxygen to water. Electrons originating from reduced cytochrome c in the intermembrane space (IMS) are transferred via the dinuclear copper A center (CU(A)) of subunit 2 and heme A of subunit 1 to the active site in subunit 1, a binuclear center (BNC) formed by heme A3 and copper B (CU(B)). The BNC reduces molecular oxygen to 2 water molecules using 4 electrons from cytochrome c in the IMS and 4 protons from the mitochondrial matrix. This Dictyostelium discoideum (Social amoeba) protein is Probable cytochrome c oxidase subunit 6B.